The primary structure comprises 275 residues: 4-diphosphocytidyl-2-C-methyl-D-erythritol kinase (275 aa).

Lys14 is an active-site residue. Position 98–108 (98–108 (PMGAGLGGGSS)) interacts with ATP. Asp140 is a catalytic residue.

The protein belongs to the GHMP kinase family. IspE subfamily.

The enzyme catalyses 4-CDP-2-C-methyl-D-erythritol + ATP = 4-CDP-2-C-methyl-D-erythritol 2-phosphate + ADP + H(+). Its pathway is isoprenoid biosynthesis; isopentenyl diphosphate biosynthesis via DXP pathway; isopentenyl diphosphate from 1-deoxy-D-xylulose 5-phosphate: step 3/6. Catalyzes the phosphorylation of the position 2 hydroxy group of 4-diphosphocytidyl-2C-methyl-D-erythritol. The sequence is that of 4-diphosphocytidyl-2-C-methyl-D-erythritol kinase from Francisella philomiragia subsp. philomiragia (strain ATCC 25017 / CCUG 19701 / FSC 153 / O#319-036).